The chain runs to 386 residues: TGF-beta-activated kinase 1 and MAP3K7-binding protein 1 (386 aa).

The 306-residue stretch at 22–327 folds into the PPM-type phosphatase domain; sequence HSCRYSKQKN…EEMTVIYVKL (306 aa).

In terms of assembly, interacts with mom-4; the interaction enhances mom-4 kinase activity.

Functionally, involved in the Wnt signaling pathway by regulating mom-4 kinase activity. This Caenorhabditis elegans protein is TGF-beta-activated kinase 1 and MAP3K7-binding protein 1.